A 145-amino-acid polypeptide reads, in one-letter code: SsrA-binding protein (145 aa).

The protein belongs to the SmpB family.

Its subcellular location is the cytoplasm. Functionally, required for rescue of stalled ribosomes mediated by trans-translation. Binds to transfer-messenger RNA (tmRNA), required for stable association of tmRNA with ribosomes. tmRNA and SmpB together mimic tRNA shape, replacing the anticodon stem-loop with SmpB. tmRNA is encoded by the ssrA gene; the 2 termini fold to resemble tRNA(Ala) and it encodes a 'tag peptide', a short internal open reading frame. During trans-translation Ala-aminoacylated tmRNA acts like a tRNA, entering the A-site of stalled ribosomes, displacing the stalled mRNA. The ribosome then switches to translate the ORF on the tmRNA; the nascent peptide is terminated with the 'tag peptide' encoded by the tmRNA and targeted for degradation. The ribosome is freed to recommence translation, which seems to be the essential function of trans-translation. The chain is SsrA-binding protein from Mycoplasma genitalium (strain ATCC 33530 / DSM 19775 / NCTC 10195 / G37) (Mycoplasmoides genitalium).